Here is a 700-residue protein sequence, read N- to C-terminus: Polyribonucleotide nucleotidyltransferase (700 aa).

Mg(2+) is bound by residues Asp485 and Asp491. Residues 552-611 (PRITVIKINPEKIRDVIGKGGAVIRALTEETGTTIELEDDGTVKIASSNGEATKEAIRRI) form the KH domain. Positions 621 to 689 (GRIYNGKVIR…RQGRVRLSIK (69 aa)) constitute an S1 motif domain.

It belongs to the polyribonucleotide nucleotidyltransferase family. In terms of assembly, component of the RNA degradosome, which is a multiprotein complex involved in RNA processing and mRNA degradation. Mg(2+) serves as cofactor.

The protein resides in the cytoplasm. It catalyses the reaction RNA(n+1) + phosphate = RNA(n) + a ribonucleoside 5'-diphosphate. Functionally, involved in mRNA degradation. Catalyzes the phosphorolysis of single-stranded polyribonucleotides processively in the 3'- to 5'-direction. This Shewanella baltica (strain OS185) protein is Polyribonucleotide nucleotidyltransferase.